Reading from the N-terminus, the 1196-residue chain is Sorbin and SH3 domain-containing protein 2 (1196 aa).

Disordered regions lie at residues 25–57 and 75–95; these read VQSS…ETLN and PNLQ…GNSG. Ser-27, Ser-28, and Ser-40 each carry phosphoserine. Residues 83 to 92 show a composition bias toward polar residues; sequence PTQSHITING. Phosphoserine occurs at positions 130 and 143. An Alanine amide modification is found at Met-148. Residues 166-227 enclose the SoHo domain; the sequence is VIKAPHYPGI…YNTPYTYNAG (62 aa). The segment covering 235–247 has biased composition (polar residues); that stretch reads AQSHPAAKTQTYR. 2 disordered regions span residues 235-314 and 329-407; these read AQSH…EPGK and SSID…GDDS. Composition is skewed to basic and acidic residues over residues 252–262 and 276–312; these read SHSDNGTDAFK and RPRD…EYEP. A Phosphoserine modification is found at Ser-254. Residues 329–343 are compositionally biased toward polar residues; the sequence is SSIDRSLERPSSSAS. Phosphoserine occurs at positions 334, 340, 343, and 354. Thr-372 is subject to Phosphothreonine. At Ser-382 the chain carries Phosphoserine. Over residues 382 to 399 the composition is skewed to low complexity; it reads SSSTFTTSFISSSPSSPS. A Phosphothreonine modification is found at Thr-387. Ser-392, Ser-393, Ser-394, Ser-396, Ser-397, Ser-399, Ser-478, Ser-589, Ser-592, Ser-645, Ser-648, Ser-844, and Ser-938 each carry phosphoserine. Residues 929–958 form a disordered region; sequence QDHESPRSYSSTLTDLGRSVSRERRGTPEK. The span at 948–958 shows a compositional bias: basic and acidic residues; it reads VSRERRGTPEK. SH3 domains follow at residues 959 to 1018 and 1034 to 1095; these read EVKL…KLTP and GEIG…VVKR. Ser-1113 and Ser-1119 each carry phosphoserine. An SH3 3 domain is found at 1137-1196; the sequence is GGGEPFQALYNYTPRNEDELELRESDVVDVMEKCDDGWFVGTSRRTKFFGTFPGNYVKRL.

In terms of assembly, interacts with ABL1/c-Abl, ABL2/v-Abl/Arg, ACTN, CBL and PALLD. Interacts with ABL, CBL, DNM1, DNM2, FLOT1, AFDN, PTK2B/PYK2, SAPAP, SPTAN1, SYNJ1, SYNJ2, VCL/vinculin and WASF. Interacts with PTPN12 and WASF1 via its SH3 domains; this interaction may mediate the partial PTPN12 and WASF1 translocation to focal adhesion sites. Ubiquitinated by CBL. As to expression, expressed in brain; found in synapses in cerebellum.

The protein resides in the cytoplasm. Its subcellular location is the perinuclear region. The protein localises to the apical cell membrane. It is found in the cell junction. It localises to the focal adhesion. The protein resides in the cell projection. Its subcellular location is the lamellipodium. Adapter protein that plays a role in the assembling of signaling complexes, being a link between ABL kinases and actin cytoskeleton. Can form complex with ABL1 and CBL, thus promoting ubiquitination and degradation of ABL1. May play a role in the regulation of pancreatic cell adhesion, possibly by acting on WASF1 phosphorylation, enhancing phosphorylation by ABL1, as well as dephosphorylation by PTPN12. Isoform 2 increases water and sodium absorption in the intestine and gall-bladder. This is Sorbin and SH3 domain-containing protein 2 (Sorbs2) from Rattus norvegicus (Rat).